We begin with the raw amino-acid sequence, 479 residues long: Glutamate--tRNA ligase (479 aa).

The short motif at 11-21 is the 'HIGH' region element; sequence PSPTGYLHIGG. Residues C108, C110, C135, and E137 each contribute to the Zn(2+) site. The short motif at 250–254 is the 'KMSKS' region element; it reads KLSKR. K253 contacts ATP.

Belongs to the class-I aminoacyl-tRNA synthetase family. Glutamate--tRNA ligase type 1 subfamily. In terms of assembly, monomer. Zn(2+) serves as cofactor.

The protein resides in the cytoplasm. It catalyses the reaction tRNA(Glu) + L-glutamate + ATP = L-glutamyl-tRNA(Glu) + AMP + diphosphate. Catalyzes the attachment of glutamate to tRNA(Glu) in a two-step reaction: glutamate is first activated by ATP to form Glu-AMP and then transferred to the acceptor end of tRNA(Glu). This Myxococcus xanthus (strain DK1622) protein is Glutamate--tRNA ligase.